The sequence spans 330 residues: uncharacterized protein (330 aa).

In terms of domain architecture, ABC transporter spans 4 to 242 (LSIQNLVVEY…AGEVLFEQST (239 aa)). 40–47 (GPSGCGKT) contributes to the ATP binding site. 210–330 (DRVVELTPDF…LIEHRALAND (121 aa)) serves as a coordination point for a nucleoside 3',5'-cyclic phosphate.

It belongs to the ABC transporter superfamily. In terms of assembly, the complex is composed of two ATP-binding proteins (MT0079), two transmembrane proteins (MT0078) and a solute-binding protein.

In terms of biological role, probably part of an ABC transporter complex. Probably responsible for energy coupling to the transport system. This is an uncharacterized protein from Mycobacterium tuberculosis (strain CDC 1551 / Oshkosh).